The following is a 569-amino-acid chain: Formate--tetrahydrofolate ligase (569 aa).

68-75 (TPAGEGKT) is a binding site for ATP.

It belongs to the formate--tetrahydrofolate ligase family.

It carries out the reaction (6S)-5,6,7,8-tetrahydrofolate + formate + ATP = (6R)-10-formyltetrahydrofolate + ADP + phosphate. Its pathway is one-carbon metabolism; tetrahydrofolate interconversion. The polypeptide is Formate--tetrahydrofolate ligase (Psychrobacter sp. (strain PRwf-1)).